The following is a 298-amino-acid chain: Cyclin-dependent kinase 2 (298 aa).

Residue M1 is modified to N-acetylmethionine. The Protein kinase domain maps to 4–286 (FQKVEKIGEG…AKAALAHPFF (283 aa)). K6 carries the post-translational modification N6-acetyllysine. Residue 10–18 (IGEGTYGVV) participates in ATP binding. The residue at position 14 (T14) is a Phosphothreonine. Y15 is subject to Phosphotyrosine; by WEE1. Y19 bears the Phosphotyrosine mark. ATP is bound by residues K33, 81-83 (EFL), and D86. The active-site Proton acceptor is the D127. ATP is bound by residues 129–132 (KPQN) and D145. Mg(2+) contacts are provided by N132 and D145. Position 160 is a phosphothreonine; by CAK and CCRK (T160).

Belongs to the protein kinase superfamily. CMGC Ser/Thr protein kinase family. CDC2/CDKX subfamily. In terms of assembly, found in a complex with CABLES1, CCNA1 and CCNE1. Interacts with CABLES1. Interacts with UHRF2. Part of a complex consisting of UHRF2, CDK2 and CCNE1. Interacts with the Speedy/Ringo proteins SPDYA and SPDYC. Interaction with SPDYA promotes kinase activation via a conformation change that alleviates obstruction of the substrate-binding cleft by the T-loop. Found in a complex with both SPDYA and CDKN1B/KIP1. Binds to RB1. Binds to CDK7. Binding to CDKN1A (p21) leads to CDK2/cyclin E inactivation at the G1-S phase DNA damage checkpoint, thereby arresting cells at the G1-S transition during DNA repair. Associated with PTPN6 and beta-catenin/CTNNB1. Interacts with CACUL1. May interact with CEP63. Interacts with ANKRD17. Interacts with CEBPA (when phosphorylated). Forms a ternary complex with CCNA2 and CDKN1B; CDKN1B inhibits the kinase activity of CDK2 through conformational rearrangements. Interacts with cyclins A, B1, B3, D, or E. Interacts with CDK2AP2. Mg(2+) is required as a cofactor. Post-translationally, phosphorylated at Thr-160 by CDK7 in a CAK complex. Phosphorylation at Thr-160 promotes kinase activity, whereas phosphorylation at Tyr-15 by WEE1 reduces slightly kinase activity. Phosphorylated on Thr-14 and Tyr-15 during S and G2 phases before being dephosphorylated by CDC25A. Nitrosylated after treatment with nitric oxide (DETA-NO).

It localises to the cytoplasm. It is found in the cytoskeleton. Its subcellular location is the microtubule organizing center. The protein localises to the centrosome. The protein resides in the nucleus. It localises to the cajal body. It is found in the endosome. The enzyme catalyses L-seryl-[protein] + ATP = O-phospho-L-seryl-[protein] + ADP + H(+). The catalysed reaction is L-threonyl-[protein] + ATP = O-phospho-L-threonyl-[protein] + ADP + H(+). With respect to regulation, phosphorylation at Thr-14 or Tyr-15 inactivates the enzyme, while phosphorylation at Thr-160 activates it. Stimulated by MYC. Inactivated by CDKN1A (p21). In terms of biological role, serine/threonine-protein kinase involved in the control of the cell cycle; essential for meiosis, but dispensable for mitosis. Phosphorylates CABLES1, CTNNB1, CDK2AP2, ERCC6, NBN, USP37, p53/TP53, NPM1, CDK7, RB1, BRCA2, MYC, NPAT, EZH2. Triggers duplication of centrosomes and DNA. Acts at the G1-S transition to promote the E2F transcriptional program and the initiation of DNA synthesis, and modulates G2 progression; controls the timing of entry into mitosis/meiosis by controlling the subsequent activation of cyclin B/CDK1 by phosphorylation, and coordinates the activation of cyclin B/CDK1 at the centrosome and in the nucleus. Crucial role in orchestrating a fine balance between cellular proliferation, cell death, and DNA repair in embryonic stem cells (ESCs). Activity of CDK2 is maximal during S phase and G2; activated by interaction with cyclin E during the early stages of DNA synthesis to permit G1-S transition, and subsequently activated by cyclin A2 (cyclin A1 in germ cells) during the late stages of DNA replication to drive the transition from S phase to mitosis, the G2 phase. EZH2 phosphorylation promotes H3K27me3 maintenance and epigenetic gene silencing. Cyclin E/CDK2 prevents oxidative stress-mediated Ras-induced senescence by phosphorylating MYC. Involved in G1-S phase DNA damage checkpoint that prevents cells with damaged DNA from initiating mitosis; regulates homologous recombination-dependent repair by phosphorylating BRCA2, this phosphorylation is low in S phase when recombination is active, but increases as cells progress towards mitosis. In response to DNA damage, double-strand break repair by homologous recombination a reduction of CDK2-mediated BRCA2 phosphorylation. Involved in regulation of telomere repair by mediating phosphorylation of NBN. Phosphorylation of RB1 disturbs its interaction with E2F1. NPM1 phosphorylation by cyclin E/CDK2 promotes its dissociation from unduplicated centrosomes, thus initiating centrosome duplication. Cyclin E/CDK2-mediated phosphorylation of NPAT at G1-S transition and until prophase stimulates the NPAT-mediated activation of histone gene transcription during S phase. Required for vitamin D-mediated growth inhibition by being itself inactivated. Involved in the nitric oxide- (NO) mediated signaling in a nitrosylation/activation-dependent manner. USP37 is activated by phosphorylation and thus triggers G1-S transition. CTNNB1 phosphorylation regulates insulin internalization. Phosphorylates FOXP3 and negatively regulates its transcriptional activity and protein stability. Phosphorylates ERCC6 which is essential for its chromatin remodeling activity at DNA double-strand breaks. Acts as a regulator of the phosphatidylinositol 3-kinase/protein kinase B signal transduction by mediating phosphorylation of the C-terminus of protein kinase B (PKB/AKT1 and PKB/AKT2), promoting its activation. In Rattus norvegicus (Rat), this protein is Cyclin-dependent kinase 2 (Cdk2).